We begin with the raw amino-acid sequence, 181 residues long: TATA-box-binding protein (181 aa).

2 consecutive repeat copies span residues 8–84 (IENI…VDMM) and 99–175 (IQNI…KARL).

It belongs to the TBP family.

Its function is as follows. General factor that plays a role in the activation of archaeal genes transcribed by RNA polymerase. Binds specifically to the TATA box promoter element which lies close to the position of transcription initiation. The polypeptide is TATA-box-binding protein (tbp) (Methanothermobacter thermautotrophicus (strain ATCC 29096 / DSM 1053 / JCM 10044 / NBRC 100330 / Delta H) (Methanobacterium thermoautotrophicum)).